A 373-amino-acid chain; its full sequence is Dual-specificity RNA methyltransferase RlmN (373 aa).

Catalysis depends on glutamate 94, which acts as the Proton acceptor. Positions 100–339 (EDDRATLCVS…VIVRKTRGDD (240 aa)) constitute a Radical SAM core domain. Cysteine 107 and cysteine 344 are oxidised to a cystine. The [4Fe-4S] cluster site is built by cysteine 114, cysteine 118, and cysteine 121. Residues 168-169 (GE), serine 200, 222-224 (SIH), and asparagine 301 contribute to the S-adenosyl-L-methionine site. The active-site S-methylcysteine intermediate is the cysteine 344.

This sequence belongs to the radical SAM superfamily. RlmN family. Requires [4Fe-4S] cluster as cofactor.

The protein localises to the cytoplasm. It catalyses the reaction adenosine(2503) in 23S rRNA + 2 reduced [2Fe-2S]-[ferredoxin] + 2 S-adenosyl-L-methionine = 2-methyladenosine(2503) in 23S rRNA + 5'-deoxyadenosine + L-methionine + 2 oxidized [2Fe-2S]-[ferredoxin] + S-adenosyl-L-homocysteine. The catalysed reaction is adenosine(37) in tRNA + 2 reduced [2Fe-2S]-[ferredoxin] + 2 S-adenosyl-L-methionine = 2-methyladenosine(37) in tRNA + 5'-deoxyadenosine + L-methionine + 2 oxidized [2Fe-2S]-[ferredoxin] + S-adenosyl-L-homocysteine. Functionally, specifically methylates position 2 of adenine 2503 in 23S rRNA and position 2 of adenine 37 in tRNAs. m2A2503 modification seems to play a crucial role in the proofreading step occurring at the peptidyl transferase center and thus would serve to optimize ribosomal fidelity. In Shewanella pealeana (strain ATCC 700345 / ANG-SQ1), this protein is Dual-specificity RNA methyltransferase RlmN.